We begin with the raw amino-acid sequence, 666 residues long: tRNA 5-methylaminomethyl-2-thiouridine biosynthesis bifunctional protein MnmC (666 aa).

The tRNA (mnm(5)s(2)U34)-methyltransferase stretch occupies residues M1–E253. The segment at V283–P666 is FAD-dependent cmnm(5)s(2)U34 oxidoreductase.

The protein in the N-terminal section; belongs to the methyltransferase superfamily. tRNA (mnm(5)s(2)U34)-methyltransferase family. This sequence in the C-terminal section; belongs to the DAO family. Requires FAD as cofactor.

It is found in the cytoplasm. It catalyses the reaction 5-aminomethyl-2-thiouridine(34) in tRNA + S-adenosyl-L-methionine = 5-methylaminomethyl-2-thiouridine(34) in tRNA + S-adenosyl-L-homocysteine + H(+). In terms of biological role, catalyzes the last two steps in the biosynthesis of 5-methylaminomethyl-2-thiouridine (mnm(5)s(2)U) at the wobble position (U34) in tRNA. Catalyzes the FAD-dependent demodification of cmnm(5)s(2)U34 to nm(5)s(2)U34, followed by the transfer of a methyl group from S-adenosyl-L-methionine to nm(5)s(2)U34, to form mnm(5)s(2)U34. The protein is tRNA 5-methylaminomethyl-2-thiouridine biosynthesis bifunctional protein MnmC of Legionella pneumophila subsp. pneumophila (strain Philadelphia 1 / ATCC 33152 / DSM 7513).